Reading from the N-terminus, the 399-residue chain is CCA-adding enzyme (399 aa).

The ATP site is built by Gly-32 and Arg-35. CTP is bound by residues Gly-32 and Arg-35. Mg(2+) is bound by residues Asp-45 and Asp-47. Arg-116, Asp-159, Arg-162, Arg-165, and Arg-168 together coordinate ATP. Residues Arg-116, Asp-159, Arg-162, Arg-165, and Arg-168 each contribute to the CTP site.

This sequence belongs to the tRNA nucleotidyltransferase/poly(A) polymerase family. Bacterial CCA-adding enzyme type 3 subfamily. As to quaternary structure, homodimer. It depends on Mg(2+) as a cofactor.

The enzyme catalyses a tRNA precursor + 2 CTP + ATP = a tRNA with a 3' CCA end + 3 diphosphate. It carries out the reaction a tRNA with a 3' CCA end + 2 CTP + ATP = a tRNA with a 3' CCACCA end + 3 diphosphate. Functionally, catalyzes the addition and repair of the essential 3'-terminal CCA sequence in tRNAs without using a nucleic acid template. Adds these three nucleotides in the order of C, C, and A to the tRNA nucleotide-73, using CTP and ATP as substrates and producing inorganic pyrophosphate. tRNA 3'-terminal CCA addition is required both for tRNA processing and repair. Also involved in tRNA surveillance by mediating tandem CCA addition to generate a CCACCA at the 3' terminus of unstable tRNAs. While stable tRNAs receive only 3'-terminal CCA, unstable tRNAs are marked with CCACCA and rapidly degraded. The polypeptide is CCA-adding enzyme (Streptococcus gordonii (strain Challis / ATCC 35105 / BCRC 15272 / CH1 / DL1 / V288)).